The sequence spans 749 residues: Probable serine/threonine-protein kinase drkC (749 aa).

Positions 1–31 (MIIINKYIRMNKIAILFSFFILICCTGYSIS) are cleaved as a signal peptide. Over 32 to 423 (YKINGINENK…TSPNYQKIIY (392 aa)) the chain is Extracellular. The tract at residues 124–153 (DRTDQVSTSSSSSSFSEENKKSSSDDSAPA) is disordered. Residues 130 to 139 (STSSSSSSFS) are compositionally biased toward low complexity. Asparagine 157, asparagine 189, asparagine 283, asparagine 358, asparagine 373, asparagine 381, and asparagine 397 each carry an N-linked (GlcNAc...) asparagine glycan. The chain crosses the membrane as a helical span at residues 424-444 (IVVGVGIAVLLIIAVGIYFII). Topologically, residues 445–749 (RLRIKNKRLN…QEIVKRLEAM (305 aa)) are cytoplasmic. Positions 491–749 (IVVQNRIGRG…QEIVKRLEAM (259 aa)) constitute a Protein kinase domain. Residues 497–505 (IGRGSCAEV) and lysine 518 contribute to the ATP site. Aspartate 615 (proton acceptor) is an active-site residue.

This sequence belongs to the protein kinase superfamily. TKL Ser/Thr protein kinase family.

It is found in the membrane. The enzyme catalyses L-seryl-[protein] + ATP = O-phospho-L-seryl-[protein] + ADP + H(+). It catalyses the reaction L-threonyl-[protein] + ATP = O-phospho-L-threonyl-[protein] + ADP + H(+). The protein is Probable serine/threonine-protein kinase drkC (drkC) of Dictyostelium discoideum (Social amoeba).